The chain runs to 204 residues: MINNFFVINMKETLKNLTKAYIGESLARNRYTCYAKIAKQEGYEQIAEIFLLTAENEREHAKWLYYLITELKKKYNIDDKAIKVDGVEVPIVLGNTAENLKASIEGEHFEHTEMYPKFADIAEKEGLKEIADRLRAIGIAEKHHEERFKKLLKEVEEGTVFKKDKPVEWVCRKCGFVHLGKEPPEKCPSCSHPRKYFEVKCEKY.

In terms of domain architecture, Ferritin-like diiron spans 1-159 (MINNFFVINM…KLLKEVEEGT (159 aa)). Fe(3+) contacts are provided by Glu-24, Glu-57, Glu-107, Glu-110, Glu-141, His-144, Cys-171, Cys-174, Cys-187, and Cys-190. Residues 166-204 (PVEWVCRKCGFVHLGKEPPEKCPSCSHPRKYFEVKCEKY) enclose the Rubredoxin-like domain.

As to quaternary structure, homodimer. Possesses two rubredoxin-like centers and two non-sulfur oxo-bridged di-iron centers per dimer. Fe(3+) serves as cofactor.

It is found in the cytoplasm. May provide oxidative stress protection via catalytic reduction of intracellular hydrogen peroxide. The sequence is that of Putative rubrerythrin from Methanocaldococcus jannaschii (strain ATCC 43067 / DSM 2661 / JAL-1 / JCM 10045 / NBRC 100440) (Methanococcus jannaschii).